Consider the following 115-residue polypeptide: Non-specific lipid-transfer protein 4.1 (115 aa).

The signal sequence occupies residues 1 to 25 (MARAAASQLVLVALVAAMLLVAADA). 4 disulfides stabilise this stretch: C29–C77, C39–C54, C55–C97, and C75–C111.

This sequence belongs to the plant LTP family.

Its function is as follows. Plant non-specific lipid-transfer proteins transfer phospholipids as well as galactolipids across membranes. May play a role in wax or cutin deposition in the cell walls of expanding epidermal cells and certain secretory tissues. The polypeptide is Non-specific lipid-transfer protein 4.1 (LTP4.1) (Hordeum vulgare (Barley)).